Reading from the N-terminus, the 221-residue chain is 2-amino-5-formylamino-6-ribosylaminopyrimidin-4(3H)-one 5'-monophosphate deformylase (221 aa).

4 residues coordinate Fe cation: Glu-29, His-31, Asp-40, and His-108.

Belongs to the creatininase superfamily. FAPy deformylase family. Homodimer. Fe(2+) serves as cofactor. Requires Zn(2+) as cofactor.

The enzyme catalyses 2-amino-5-formylamino-6-(5-phospho-D-ribosylamino)pyrimidin-4(3H)-one + H2O = 2,5-diamino-6-(1-D-ribosylamino)pyrimidin-4(3H)-one 5'-phosphate + formate + H(+). The protein operates within cofactor biosynthesis; coenzyme F420 biosynthesis. Its pathway is cofactor biosynthesis; riboflavin biosynthesis. Its function is as follows. Catalyzes the hydrolysis of the formamide of 2-amino-5-formylamino-6-ribosylamino-4(3H)-pyrimidinone 5'-monophosphate (FAPy) to form 2,5-diamino-6-ribosylamino-4(3H)-pyrimidinone 5'-phosphate (APy). The polypeptide is 2-amino-5-formylamino-6-ribosylaminopyrimidin-4(3H)-one 5'-monophosphate deformylase (Methanococcus maripaludis (strain C5 / ATCC BAA-1333)).